A 287-amino-acid polypeptide reads, in one-letter code: Phosphatidylserine decarboxylase proenzyme (287 aa).

Catalysis depends on charge relay system; for autoendoproteolytic cleavage activity residues Asp-90, His-147, and Ser-252. Ser-252 (schiff-base intermediate with substrate; via pyruvic acid; for decarboxylase activity) is an active-site residue. At Ser-252 the chain carries Pyruvic acid (Ser); by autocatalysis.

Belongs to the phosphatidylserine decarboxylase family. PSD-B subfamily. Prokaryotic type I sub-subfamily. Heterodimer of a large membrane-associated beta subunit and a small pyruvoyl-containing alpha subunit. It depends on pyruvate as a cofactor. Is synthesized initially as an inactive proenzyme. Formation of the active enzyme involves a self-maturation process in which the active site pyruvoyl group is generated from an internal serine residue via an autocatalytic post-translational modification. Two non-identical subunits are generated from the proenzyme in this reaction, and the pyruvate is formed at the N-terminus of the alpha chain, which is derived from the carboxyl end of the proenzyme. The autoendoproteolytic cleavage occurs by a canonical serine protease mechanism, in which the side chain hydroxyl group of the serine supplies its oxygen atom to form the C-terminus of the beta chain, while the remainder of the serine residue undergoes an oxidative deamination to produce ammonia and the pyruvoyl prosthetic group on the alpha chain. During this reaction, the Ser that is part of the protease active site of the proenzyme becomes the pyruvoyl prosthetic group, which constitutes an essential element of the active site of the mature decarboxylase.

It localises to the cell membrane. It catalyses the reaction a 1,2-diacyl-sn-glycero-3-phospho-L-serine + H(+) = a 1,2-diacyl-sn-glycero-3-phosphoethanolamine + CO2. It functions in the pathway phospholipid metabolism; phosphatidylethanolamine biosynthesis; phosphatidylethanolamine from CDP-diacylglycerol: step 2/2. Its function is as follows. Catalyzes the formation of phosphatidylethanolamine (PtdEtn) from phosphatidylserine (PtdSer). In Pseudomonas putida (strain W619), this protein is Phosphatidylserine decarboxylase proenzyme.